Here is a 403-residue protein sequence, read N- to C-terminus: Nodal homolog (403 aa).

A signal peptide spans 1–18 (MAFLTAVLCFGFACMVQG). The propeptide occupies 19-278 (VPSWLESRIP…RMPGIRRHRR (260 aa)). 3 N-linked (GlcNAc...) asparagine glycosylation sites follow: Asn68, Asn133, and Asn169. The disordered stretch occupies residues 195–220 (AERGSGMSSAEFLDSPGDSPQYNPHH). Disulfide bonds link Cys303-Cys369, Cys332-Cys400, and Cys336-Cys402. Residue Asn341 is glycosylated (N-linked (GlcNAc...) asparagine).

This sequence belongs to the TGF-beta family. As to quaternary structure, homodimer; disulfide-linked. Interacts with, and is inhibited by cer1 and gdf10/bmp3b.

It localises to the secreted. Its function is as follows. Cooperation and regulatory loops of multiple nodals are essential for mesendoderm patterning in early embryos. Essential for mesoderm formation and axial patterning during embryonic development. Activates the activin-like signaling pathway to induce dorsal and ventral mesoderm in animal cap ectoderm. In addition, also dorsalizes ventral marginal zone (VMZ) tissues during gastrulation. Acts in a downstream signaling cascade via cripto and cer1 to mediate cardiogenesis in embryonic mesoderm. Directs the orientation of the left-right axis by driving the left-specific gene cascade in the left lateral plate mesoderm. This Xenopus tropicalis (Western clawed frog) protein is Nodal homolog.